The sequence spans 103 residues: Small ribosomal subunit protein uS10 (103 aa).

The protein belongs to the universal ribosomal protein uS10 family. As to quaternary structure, part of the 30S ribosomal subunit.

Its function is as follows. Involved in the binding of tRNA to the ribosomes. This is Small ribosomal subunit protein uS10 from Salinibacter ruber (strain DSM 13855 / M31).